Here is a 557-residue protein sequence, read N- to C-terminus: Formate--tetrahydrofolate ligase (557 aa).

Residue 65–72 (TPAGEGKT) participates in ATP binding.

It belongs to the formate--tetrahydrofolate ligase family.

The enzyme catalyses (6S)-5,6,7,8-tetrahydrofolate + formate + ATP = (6R)-10-formyltetrahydrofolate + ADP + phosphate. Its pathway is one-carbon metabolism; tetrahydrofolate interconversion. The sequence is that of Formate--tetrahydrofolate ligase from Methylorubrum extorquens (strain PA1) (Methylobacterium extorquens).